The sequence spans 686 residues: Cadmium, zinc and cobalt-transporting ATPase (686 aa).

One can recognise an HMA domain in the interval 1-62 (MQEYHIHNLD…FIKQNEPHLS (62 aa)). The Cytoplasmic segment spans residues 1–72 (MQEYHIHNLD…LSFKEATEKP (72 aa)). Cd(2+) contacts are provided by C11 and C14. Residues C11 and C14 each contribute to the Co(2+) site. Zn(2+)-binding residues include C11 and C14. Residues 73–92 (LSFTPLIITIMVFLGAILIL) form a helical membrane-spanning segment. The Extracellular portion of the chain corresponds to 93–102 (HLNPSPLIEK). Residues 103–124 (AMFFVLALVYLVSGKDVILGAF) traverse the membrane as a helical segment. Residues 125–131 (RGLRKGQ) are Cytoplasmic-facing. Residues 132–151 (FFDENALMLIATIAAFFVGA) traverse the membrane as a helical segment. At 152–154 (YEE) the chain is on the extracellular side. Residues 155–174 (SVSIMVFYSAGEFLQKLAVS) form a helical membrane-spanning segment. Residues 175 to 308 (RSKKSLKALV…ITKFSRYYTP (134 aa)) lie on the Cytoplasmic side of the membrane. Residues 309 to 327 (SVLFIALMIAVLPPLFSMG) form a helical membrane-spanning segment. Residues 328–332 (SFDEW) are Extracellular-facing. The chain crosses the membrane as a helical span at residues 333-350 (IYRGLVALMVSCPCALVI). Residues 351-635 (SVPLGYFGGV…VLAIAKKTKS (285 aa)) are Cytoplasmic-facing. D388 serves as the catalytic 4-aspartylphosphate intermediate. Positions 583 and 587 each coordinate Mg(2+). The chain crosses the membrane as a helical span at residues 636-657 (IIWQNILFALGIKAVFIVLGLM). The Extracellular portion of the chain corresponds to 658–665 (GVASLWEA). The chain crosses the membrane as a helical span at residues 666 to 681 (VFGDVGVTLLALANSM). Residues 682 to 686 (RAMRA) lie on the Cytoplasmic side of the membrane.

Belongs to the cation transport ATPase (P-type) (TC 3.A.3) family. Type IB subfamily.

Its subcellular location is the cell membrane. The catalysed reaction is Zn(2+)(in) + ATP + H2O = Zn(2+)(out) + ADP + phosphate + H(+). It catalyses the reaction Cd(2+)(in) + ATP + H2O = Cd(2+)(out) + ADP + phosphate + H(+). Couples the hydrolysis of ATP with the transport of cadmium, zinc and cobalt out of the cell. This ion efflux may influence the activity of urease, which is essential for the survival of the bacterium in the gastric environment. The protein is Cadmium, zinc and cobalt-transporting ATPase (cadA) of Helicobacter pylori (strain ATCC 700392 / 26695) (Campylobacter pylori).